Reading from the N-terminus, the 384-residue chain is Putative odorant receptor 98b (384 aa).

The Cytoplasmic portion of the chain corresponds to Met-1–Arg-34. The helical transmembrane segment at Ser-35–Gln-55 threads the bilayer. Residues Asn-56–Ser-66 lie on the Extracellular side of the membrane. Residues Leu-67–Tyr-87 form a helical membrane-spanning segment. Residues Lys-88–Tyr-128 lie on the Cytoplasmic side of the membrane. A helical transmembrane segment spans residues Ala-129 to Ile-149. At Ser-150–Tyr-177 the chain is on the extracellular side. Residues Ile-178 to Val-198 traverse the membrane as a helical segment. Topologically, residues Asp-199–Pro-258 are cytoplasmic. Residues Leu-259–Ala-279 form a helical membrane-spanning segment. Topologically, residues Asn-280–Pro-284 are extracellular. A helical membrane pass occupies residues Ala-285–Phe-305. Over Cys-306–Leu-329 the chain is Cytoplasmic. Residues Leu-330–Gly-350 form a helical membrane-spanning segment. Over Cys-351 to Asp-384 the chain is Extracellular.

The protein belongs to the insect chemoreceptor superfamily. Heteromeric odorant receptor channel (TC 1.A.69) family. Or1a subfamily. As to quaternary structure, interacts with Orco. Complexes exist early in the endomembrane system in olfactory sensory neurons (OSNs), coupling these complexes to the conserved ciliary trafficking pathway.

Its subcellular location is the cell membrane. Its function is as follows. Odorant receptor which mediates acceptance or avoidance behavior, depending on its substrates. The odorant receptor repertoire encodes a large collection of odor stimuli that vary widely in identity, intensity, and duration. May form a complex with Orco to form odorant-sensing units, providing sensitive and prolonged odorant signaling and calcium permeability. The polypeptide is Putative odorant receptor 98b (Or98b) (Drosophila melanogaster (Fruit fly)).